The primary structure comprises 165 residues: Neurotrophin-3 (165 aa).

Positions 1–3 (IQS) are cleaved as a signal peptide. The propeptide occupies 4–119 (TSMDQGSLSE…VLNQTSRRKR (116 aa)). N-linked (GlcNAc...) asparagine glycosylation is present at Asn-112.

Belongs to the NGF-beta family.

Its subcellular location is the secreted. Its function is as follows. Seems to promote the survival of visceral and proprioceptive sensory neurons. In Morelia spilota (Carpet python), this protein is Neurotrophin-3 (NTF3).